The sequence spans 637 residues: Sodium-dependent phosphate transport protein 2A (637 aa).

Residues 1–103 lie on the Cytoplasmic side of the membrane; the sequence is MMSYSERLGG…LAQVGTKLLK (103 aa). Ser14 and Ser34 each carry phosphoserine. Residues 104–125 traverse the membrane as a helical segment; that stretch reads VPLMLGFLYLFVCSLDVLSSAF. Residues 126–145 lie on the Extracellular side of the membrane; the sequence is QLAGGKVAGDIFKDNAILSN. Residues 146-163 traverse the membrane as a helical segment; it reads PVAGLVVGILVTVLVQSS. Residues 164-216 are Cytoplasmic-facing; sequence STSTSIIVSMVSSGLLEVSSAIPIIMGSNIGTSVTNTIVALMQAGDRTDFRRA. A helical transmembrane segment spans residues 217 to 236; the sequence is FAGATVHDCFNWLSVLVLLP. 2 disulfides stabilise this stretch: Cys225/Cys520 and Cys306/Cys334. The Extracellular segment spans residues 237-345; sequence LEAATGYLHH…HIFVDTGLPD (109 aa). N-linked (GlcNAc...) asparagine glycans are attached at residues Asn298 and Asn328. A helical membrane pass occupies residues 346-368; sequence LAVGLILLAGSLVVLCTCLILLV. Residues 369 to 410 are Cytoplasmic-facing; that stretch reads KMLNSLLKGQVANVIQKVINTDFPAPFTWVTGYFAMVVGASM. A helical membrane pass occupies residues 411–434; that stretch reads TFVVQSSSVFTSAITPLIGLGVIS. The Extracellular portion of the chain corresponds to 435–464; the sequence is IERAYPLTLGSNIGTTTTAILAALASPREK. A helical membrane pass occupies residues 465 to 485; the sequence is LSSSFQIALCHFFFNISGILL. At 486–511 the chain is on the cytoplasmic side; that stretch reads WYPLPCTRLPIRMAKALGKRTAKYRW. Phosphothreonine; by PKC is present on Thr506. Residues 512–532 traverse the membrane as a helical segment; that stretch reads FAVLYLLVCFLLLPSLVFGIS. The Extracellular segment spans residues 533–537; sequence MAGWQ. Residues 538-559 traverse the membrane as a helical segment; sequence AMVGVGTPFGALLAFVVLVNVL. Topologically, residues 560-637 are cytoplasmic; the sequence is QSRSPGHLPK…LPAHHNATRL (78 aa). Ser605 is subject to Phosphoserine. Thr621 carries the post-translational modification Phosphothreonine. Ser623 carries the post-translational modification Phosphoserine.

This sequence belongs to the SLC34A transporter family. In terms of assembly, interacts via its C-terminal region with NHERF4. Interacts with NHERF1. Interacts with TMEM174; regulates SLC34A1 internalization by PTH and FGF23. As to expression, kidney.

It localises to the apical cell membrane. The protein resides in the cell membrane. The enzyme catalyses 3 Na(+)(out) + phosphate(out) = 3 Na(+)(in) + phosphate(in). Its activity is regulated as follows. Transport activity is significantly increased in response to dietary phosphate deprivation. Functionally, involved in actively transporting phosphate into cells via Na(+) cotransport in the renal brush border membrane. The cotransport has a Na(+):Pi stoichiometry of 3:1 and is electrogenic. The polypeptide is Sodium-dependent phosphate transport protein 2A (Rattus norvegicus (Rat)).